A 270-amino-acid polypeptide reads, in one-letter code: Decarboxylase NovR (270 aa).

The protein belongs to the aldolase class II family.

The protein operates within antibiotic biosynthesis; novobiocin biosynthesis. May mediate the 2 consecutive oxidative decarboxylation steps in the biosynthesis of the prenylated hydroxybenzoic acid moiety of novobiocin, an aminocoumarin family antibiotic that targets bacterial DNA gyrases. The polypeptide is Decarboxylase NovR (novR) (Streptomyces niveus (Streptomyces spheroides)).